A 363-amino-acid polypeptide reads, in one-letter code: Probable butyrate kinase (363 aa).

It belongs to the acetokinase family.

Its subcellular location is the cytoplasm. It catalyses the reaction butanoate + ATP = butanoyl phosphate + ADP. This chain is Probable butyrate kinase, found in Maridesulfovibrio salexigens (strain ATCC 14822 / DSM 2638 / NCIMB 8403 / VKM B-1763) (Desulfovibrio salexigens).